Reading from the N-terminus, the 118-residue chain is Basic phospholipase A2 PA-9C (118 aa).

7 disulfide bridges follow: cysteine 11–cysteine 71, cysteine 27–cysteine 117, cysteine 29–cysteine 45, cysteine 44–cysteine 98, cysteine 51–cysteine 91, cysteine 60–cysteine 84, and cysteine 78–cysteine 89. The Ca(2+) site is built by tyrosine 28, glycine 30, and glycine 32. Histidine 48 is a catalytic residue. Residue aspartate 49 coordinates Ca(2+). Residue aspartate 92 is part of the active site.

The protein belongs to the phospholipase A2 family. Group I subfamily. D49 sub-subfamily. Ca(2+) is required as a cofactor. Expressed by the venom gland.

It is found in the secreted. The enzyme catalyses a 1,2-diacyl-sn-glycero-3-phosphocholine + H2O = a 1-acyl-sn-glycero-3-phosphocholine + a fatty acid + H(+). In terms of biological role, PLA2 catalyzes the calcium-dependent hydrolysis of the 2-acyl groups in 3-sn-phosphoglycerides. This chain is Basic phospholipase A2 PA-9C, found in Pseudechis australis (Mulga snake).